We begin with the raw amino-acid sequence, 181 residues long: Oligoribonuclease (181 aa).

An Exonuclease domain is found at 8-171 (LIWIDLEMTG…QDIQESIAEL (164 aa)). Tyr129 is a catalytic residue.

Belongs to the oligoribonuclease family.

It localises to the cytoplasm. 3'-to-5' exoribonuclease specific for small oligoribonucleotides. This chain is Oligoribonuclease, found in Shewanella oneidensis (strain ATCC 700550 / JCM 31522 / CIP 106686 / LMG 19005 / NCIMB 14063 / MR-1).